A 645-amino-acid chain; its full sequence is L-aspartate oxidase, chloroplastic (645 aa).

A chloroplast-targeting transit peptide spans 1–70 (MAALMNGFGS…RMRHKVGSIR (70 aa)). Residues 92 to 95 (SGVA), Lys-114, 121 to 128 (NTNYAQGG), and Asp-292 contribute to the FAD site. Catalysis depends on Arg-368, which acts as the Proton donor/acceptor. FAD contacts are provided by residues Glu-453 and 469 to 470 (SL).

This sequence belongs to the FAD-dependent oxidoreductase 2 family. NadB subfamily. FAD is required as a cofactor.

Its subcellular location is the plastid. The protein localises to the chloroplast. It carries out the reaction L-aspartate + O2 = iminosuccinate + H2O2. It participates in cofactor biosynthesis; NAD(+) biosynthesis; iminoaspartate from L-aspartate (oxidase route): step 1/1. Catalyzes the oxidation of L-aspartate to iminoaspartate. The protein is L-aspartate oxidase, chloroplastic of Oryza sativa subsp. japonica (Rice).